The primary structure comprises 393 residues: S-adenosylmethionine synthase 2 (393 aa).

Glu-9 is a binding site for Mg(2+). His-15 contacts ATP. Residue Glu-43 participates in K(+) binding. Glu-56 and Gln-99 together coordinate L-methionine. Residues 167–169, 235–238, Asp-246, 252–253, Ala-269, Lys-273, and Lys-277 each bind ATP; these read DGK, SGRF, and RK. Asp-246 contacts L-methionine. Position 277 (Lys-277) interacts with L-methionine.

This sequence belongs to the AdoMet synthase family. As to quaternary structure, homotetramer. It depends on Mn(2+) as a cofactor. The cofactor is Mg(2+). Co(2+) serves as cofactor. K(+) is required as a cofactor. Requires NH4(+) as cofactor. Mostly expressed in roots, and, to a lower extent, in hypocotyls and cotyledons.

It is found in the cytoplasm. It catalyses the reaction L-methionine + ATP + H2O = S-adenosyl-L-methionine + phosphate + diphosphate. Its pathway is amino-acid biosynthesis; S-adenosyl-L-methionine biosynthesis; S-adenosyl-L-methionine from L-methionine: step 1/1. With respect to regulation, inhibited by products of SAMS reaction (SAM, Pi, PPi), substrate analogs (cycloleucine and ethionine), and alternative nucleotides (GTP, CTP and ADP). Strongly repressed by PPPi. Functionally, catalyzes the formation of S-adenosylmethionine from methionine and ATP. The reaction comprises two steps that are both catalyzed by the same enzyme: formation of S-adenosylmethionine (AdoMet) and triphosphate, and subsequent hydrolysis of the triphosphate. The polypeptide is S-adenosylmethionine synthase 2 (SAMS2) (Catharanthus roseus (Madagascar periwinkle)).